The primary structure comprises 67 residues: uncharacterized protein (67 aa).

A helical transmembrane segment spans residues 4-24; sequence WIFAILMLGVAIVLSIIATFF.

Its subcellular location is the membrane. This is an uncharacterized protein from Bacillus anthracis.